We begin with the raw amino-acid sequence, 338 residues long: DNA-directed RNA polymerase subunit alpha (338 aa).

The segment at 1–225 is alpha N-terminal domain (alpha-NTD); that stretch reads MLISQRPTLT…ELFGLARELN (225 aa). An alpha C-terminal domain (alpha-CTD) region spans residues 242-338; sequence YIAAYSMPIE…YIDVEPEDAE (97 aa). The interval 314-338 is disordered; sequence FDPSTLEGYDAETGGYIDVEPEDAE.

This sequence belongs to the RNA polymerase alpha chain family. In terms of assembly, homodimer. The RNAP catalytic core consists of 2 alpha, 1 beta, 1 beta' and 1 omega subunit. When a sigma factor is associated with the core the holoenzyme is formed, which can initiate transcription.

The enzyme catalyses RNA(n) + a ribonucleoside 5'-triphosphate = RNA(n+1) + diphosphate. Its function is as follows. DNA-dependent RNA polymerase catalyzes the transcription of DNA into RNA using the four ribonucleoside triphosphates as substrates. The protein is DNA-directed RNA polymerase subunit alpha of Corynebacterium efficiens (strain DSM 44549 / YS-314 / AJ 12310 / JCM 11189 / NBRC 100395).